The sequence spans 59 residues: Large ribosomal subunit protein bL32 (59 aa).

Positions 1–19 (MAQPKKKTSKSRRNMRRSH) are enriched in basic residues. Residues 1-20 (MAQPKKKTSKSRRNMRRSHD) form a disordered region.

This sequence belongs to the bacterial ribosomal protein bL32 family.

The polypeptide is Large ribosomal subunit protein bL32 (Maridesulfovibrio salexigens (strain ATCC 14822 / DSM 2638 / NCIMB 8403 / VKM B-1763) (Desulfovibrio salexigens)).